The following is a 141-amino-acid chain: Hemoglobin subunit alpha-A (141 aa).

The Globin domain maps to 1 to 141; that stretch reads VLSASDKSNV…VGTVLTAKYR (141 aa). An O2-binding site is contributed by H58. H87 serves as a coordination point for heme b.

This sequence belongs to the globin family. As to quaternary structure, heterotetramer of two alpha chains and two beta chains. As to expression, red blood cells.

Involved in oxygen transport from the lung to the various peripheral tissues. This chain is Hemoglobin subunit alpha-A (HBAA), found in Streptopelia orientalis (Eastern turtle dove).